A 104-amino-acid polypeptide reads, in one-letter code: Enhancer of rudimentary homolog (104 aa).

Ser-2 bears the N-acetylserine mark. Thr-11 is subject to Phosphothreonine. Lys-12 participates in a covalent cross-link: Glycyl lysine isopeptide (Lys-Gly) (interchain with G-Cter in SUMO2).

The protein belongs to the E(R) family. In terms of assembly, homodimer.

The protein localises to the nucleus. Functionally, may have a role in the cell cycle. The polypeptide is Enhancer of rudimentary homolog (ERH) (Bos taurus (Bovine)).